A 402-amino-acid polypeptide reads, in one-letter code: Acetate kinase (402 aa).

Residue Asn-10 coordinates Mg(2+). Lys-17 contributes to the ATP binding site. Arg-89 lines the substrate pocket. Residue Asp-148 is the Proton donor/acceptor of the active site. Residues 208–212 (HLGNG), 283–285 (DCR), and 334–338 (GIGEN) each bind ATP. A Mg(2+)-binding site is contributed by Glu-389.

The protein belongs to the acetokinase family. As to quaternary structure, homodimer. Mg(2+) is required as a cofactor. The cofactor is Mn(2+).

The protein resides in the cytoplasm. It carries out the reaction acetate + ATP = acetyl phosphate + ADP. The protein operates within metabolic intermediate biosynthesis; acetyl-CoA biosynthesis; acetyl-CoA from acetate: step 1/2. In terms of biological role, catalyzes the formation of acetyl phosphate from acetate and ATP. Can also catalyze the reverse reaction. The chain is Acetate kinase from Actinobacillus pleuropneumoniae serotype 7 (strain AP76).